The chain runs to 574 residues: Multidrug and toxin extrusion protein 1 (574 aa).

At 1-51 the chain is on the cytoplasmic side; it reads MEGQAAETNHRAETVVRAELCLSAEQGPETTAYSQKRCLFLPMEVWQEAQQ. The helical transmembrane segment at 52–72 threads the bilayer; it reads LLALAAPAFLSQLMIFLISIV. The Extracellular portion of the chain corresponds to 73 to 86; that stretch reads SSIFCGHLGKVELD. Residues 87–107 form a helical membrane-spanning segment; sequence AVSLAITIINITGVAVGTGLA. At 108–133 the chain is on the cytoplasmic side; the sequence is GACDTLISQTFGGSNLKLVGIILQRG. The helical transmembrane segment at 134–154 threads the bilayer; that stretch reads ILILLLFCFPCWALLINTESI. The Extracellular portion of the chain corresponds to 155-168; it reads LLLFRQDPEVSKLT. The helical transmembrane segment at 169-189 threads the bilayer; the sequence is QIYVLIFLPALPAAFLYQLLA. Residues 190–204 lie on the Cytoplasmic side of the membrane; that stretch reads KYLQNQGIIYPQVLT. Residues 205–225 form a helical membrane-spanning segment; the sequence is GFIANIFNALFNYILLYVLGL. The Extracellular portion of the chain corresponds to 226–230; sequence GVMGS. The chain crosses the membrane as a helical span at residues 231 to 251; sequence ACANTVSQFIQMILLFLYIVW. Residues 252-271 lie on the Cytoplasmic side of the membrane; the sequence is RRLYADTWGGWSQACFEEWG. A helical transmembrane segment spans residues 272 to 291; that stretch reads AFIRLAVASMLMLCIEWWAF. The Extracellular segment spans residues 292 to 309; that stretch reads EISMFLAGVLGMVDLAAQ. A helical transmembrane segment spans residues 310 to 330; it reads AIIYQVAIVVYLIPLGLCIAG. Residues 331 to 350 lie on the Cytoplasmic side of the membrane; it reads SIRVGHGLGAGNTEQAKRSA. The chain crosses the membrane as a helical span at residues 351-371; sequence LVVLCMTELCALLSGILLATL. Topologically, residues 372 to 384 are extracellular; that stretch reads KDVVAYIFTSDPN. The helical transmembrane segment at 385–405 threads the bilayer; the sequence is IVALVSYVLPVYSACLLFDAC. Over 406 to 430 the chain is Cytoplasmic; it reads VAACGGILRGSGKLKVGAISHTVGY. The chain crosses the membrane as a helical span at residues 431-451; sequence YVIGLPLGISLMFAAKLGIIG. Residues 452 to 453 lie on the Extracellular side of the membrane; sequence FW. Residues 454–472 traverse the membrane as a helical segment; sequence FGILACGIAQSIFLIIFVF. Residues 473–549 lie on the Cytoplasmic side of the membrane; that stretch reads KIDWKRASEE…AGAAQHTRTL (77 aa). The disordered stretch occupies residues 500–541; it reads KPSVYQEGCPTEQGDVDPGNVESIEFSQSSTSSEGTSPTPAG. Residues 521–538 are compositionally biased toward low complexity; sequence ESIEFSQSSTSSEGTSPT. The chain crosses the membrane as a helical span at residues 550-570; sequence ILTRGLALGCAVGTLIIGIVI. Residues 571–574 lie on the Extracellular side of the membrane; that stretch reads RLSV.

Belongs to the multi antimicrobial extrusion (MATE) (TC 2.A.66.1) family.

It is found in the cell membrane. The protein localises to the apical cell membrane. It catalyses the reaction thiamine(out) + H(+)(in) = thiamine(in) + H(+)(out). It carries out the reaction estrone 3-sulfate(in) + H(+)(out) = estrone 3-sulfate(out) + H(+)(in). The catalysed reaction is creatinine(in) + H(+)(out) = creatinine(out) + H(+)(in). The enzyme catalyses agmatine(in) + H(+)(out) = agmatine(out) + H(+)(in). In terms of biological role, multidrug efflux pump that functions as a H(+)/organic cation antiporter. Mediates the secretion of cationic compounds including drugs, toxins and endogenous metabolites. Plays a role physiological role in the excretion of drugs, toxins and endogenous metabolites through the kidney and liver, into urine and bile respectively. The sequence is that of Multidrug and toxin extrusion protein 1 (slc47a1) from Xenopus tropicalis (Western clawed frog).